The chain runs to 377 residues: SH2/SH3 adapter protein Nck1 (377 aa).

At Ala2 the chain carries N-acetylalanine. In terms of domain architecture, SH3 1 spans 2 to 61; it reads AEEVVVVAKFDYVAQQEQELDIKKNERLWLLDDSKSWWRVRNSMNKTGFVPSNYVERKNS. A phosphoserine mark is found at Ser85, Ser91, and Ser96. Position 105 is a phosphotyrosine (Tyr105). The SH3 2 domain occupies 106 to 165; it reads DLNMPAFVKFNYMAEREDELSLIKGTKVIVMEKCSDGWWRGSYNGQIGWFPSNYVTEEGD. At Ser166 the chain carries Phosphoserine. The 63-residue stretch at 190 to 252 folds into the SH3 3 domain; it reads QVLHVVQALY…PKNYVTIMQN (63 aa). The SH2 domain occupies 282–376; sequence WYYGKVTRHQ…GEKLYLVKHL (95 aa).

In terms of assembly, interacts (via SH2 domain and SH3 domain 2) with EGFR. Interacts with PAK1 and SOS1. Interacts (via SH3 domains) with PKN2. Associates with BLNK, PLCG1, VAV1 and NCK1 in a B-cell antigen receptor-dependent fashion. Interacts with SOCS7. This interaction is required for nuclear import. Part of a complex containing PPP1R15B, PP1 and NCK1. Interacts with RALGPS1. Interacts with CAV2 (tyrosine phosphorylated form). Interacts with ADAM15. Interacts with FASLG. Directly interacts with RASA1. Interacts with isoform 4 of MINK1. Interacts with FLT1 (tyrosine phosphorylated). Interacts with KDR (tyrosine phosphorylated). Interacts (via SH2 domain) with EPHB1; activates the JUN cascade to regulate cell adhesion. Interacts with EPHA2. Interacts (via SH2 domain) with PDGFRB (tyrosine phosphorylated). Interacts with the inactive form of EIF2AK2/PKR. Interacts with PTPN1. Interacts with INSR/insulin receptor (in response to insulin stimulation); this interaction may mediate PTPN1 recruitment leading to INSR dephosphorylation. Interacts with CD3E (via Proline-rich sequence); the interaction is ligand dependent but independent of tyrosine kinase activation. Interacts with EGFR. Interacts with IRS1. Post-translationally, phosphorylated on Ser and Tyr residues. Phosphorylated in response to activation of EGFR and FcERI. Phosphorylated by activated PDGFRB.

Its subcellular location is the cytoplasm. The protein resides in the endoplasmic reticulum. It is found in the nucleus. Adapter protein which associates with tyrosine-phosphorylated growth factor receptors, such as KDR and PDGFRB, or their cellular substrates. Maintains low levels of EIF2S1 phosphorylation by promoting its dephosphorylation by PP1. Plays a role in the DNA damage response, not in the detection of the damage by ATM/ATR, but for efficient activation of downstream effectors, such as that of CHEK2. Plays a role in ELK1-dependent transcriptional activation in response to activated Ras signaling. Modulates the activation of EIF2AK2/PKR by dsRNA. May play a role in cell adhesion and migration through interaction with ephrin receptors. Also acts as an adpater protein for the T cell receptor complex (TCR-CD3E). Upon ligand engagement, is recruited by CD3E and promotes maturation of the immune synapse and T cell activation. This chain is SH2/SH3 adapter protein Nck1 (Nck1), found in Mus musculus (Mouse).